The chain runs to 633 residues: DNA topoisomerase 1 (633 aa).

One can recognise a Toprim domain in the interval 6 to 115 (KKYIVVESPA…KNRIVFSEIT (110 aa)). Residues Glu12 and Asp84 each contribute to the Mg(2+) site. Residues 130–543 (DMKKVRAQLA…EFYESFSSVF (414 aa)) enclose the Topo IA-type catalytic domain. Positions 164 to 169 (SAGRVQ) are interaction with DNA. Tyr288 serves as the catalytic O-(5'-phospho-DNA)-tyrosine intermediate. 2 disulfides stabilise this stretch: Cys559–Cys578 and Cys561–Cys580. A C4-type zinc finger spans residues 559-580 (CSCGKEMRLSFGKYGFYLKCEC). The disordered stretch occupies residues 601-633 (LGRKDSESGSPDGRSVEGKGNLSEKRRKGKKGS).

It belongs to the type IA topoisomerase family. As to quaternary structure, monomer. Mg(2+) serves as cofactor.

The catalysed reaction is ATP-independent breakage of single-stranded DNA, followed by passage and rejoining.. Functionally, releases the supercoiling and torsional tension of DNA, which is introduced during the DNA replication and transcription, by transiently cleaving and rejoining one strand of the DNA duplex. Introduces a single-strand break via transesterification at a target site in duplex DNA. The scissile phosphodiester is attacked by the catalytic tyrosine of the enzyme, resulting in the formation of a DNA-(5'-phosphotyrosyl)-enzyme intermediate and the expulsion of a 3'-OH DNA strand. The free DNA strand then undergoes passage around the unbroken strand, thus removing DNA supercoils. Finally, in the religation step, the DNA 3'-OH attacks the covalent intermediate to expel the active-site tyrosine and restore the DNA phosphodiester backbone. The chain is DNA topoisomerase 1 from Thermotoga maritima (strain ATCC 43589 / DSM 3109 / JCM 10099 / NBRC 100826 / MSB8).